A 485-amino-acid polypeptide reads, in one-letter code: Rhamnulokinase (485 aa).

Position 8 to 12 (8 to 12 (ASSGR)) interacts with ATP. Residues Gly-78 and 231-233 (HDT) each bind substrate. Asp-232 serves as the catalytic Proton acceptor. ATP is bound at residue Thr-254. Asn-291 contacts substrate. Gln-299 contacts ATP. An intrachain disulfide couples Cys-348 to Cys-365. Gly-397 lines the ATP pocket. Residues Cys-408 and Cys-412 are joined by a disulfide bond.

The protein belongs to the rhamnulokinase family. It depends on Mg(2+) as a cofactor.

It catalyses the reaction L-rhamnulose + ATP = L-rhamnulose 1-phosphate + ADP + H(+). The protein operates within carbohydrate degradation; L-rhamnose degradation; glycerone phosphate from L-rhamnose: step 2/3. Functionally, involved in the catabolism of L-rhamnose (6-deoxy-L-mannose). Catalyzes the transfer of the gamma-phosphate group from ATP to the 1-hydroxyl group of L-rhamnulose to yield L-rhamnulose 1-phosphate. The sequence is that of Rhamnulokinase from Yersinia pestis bv. Antiqua (strain Antiqua).